Here is a 106-residue protein sequence, read N- to C-terminus: uncharacterized protein (106 aa).

Positions 54 to 106 (RSTLVATSPRRRSLVQQRRPPLREQNGGSGSSCVSSGGSASTVKTPGSRRASK) are disordered. Residues 84-94 (SSCVSSGGSAS) are compositionally biased toward low complexity.

This is an uncharacterized protein from Human adenovirus C serotype 2 (HAdV-2).